We begin with the raw amino-acid sequence, 269 residues long: Gene 51 glycoprotein (269 aa).

Residues Asn-53, Asn-58, Asn-74, and Asn-78 are each glycosylated (N-linked (GlcNAc...) asparagine; by host). Disordered stretches follow at residues 67-87 and 103-137; these read LSTS…TTPY and MLNS…ASKN. Over residues 76–87 the composition is skewed to low complexity; that stretch reads TSNTSYSQTTPY. Positions 103–112 are enriched in polar residues; it reads MLNSTPNKPL. Residues 113-136 are compositionally biased toward low complexity; sequence SSTKLTPKSQSSSQSTKTTKQASK. N-linked (GlcNAc...) asparagine; by host glycosylation is found at Asn-137, Asn-161, Asn-170, and Asn-191.

In Saimiriine herpesvirus 2 (strain 11) (SaHV-2), this protein is Gene 51 glycoprotein (51).